The chain runs to 202 residues: GTP-binding protein rho1 (202 aa).

Residue 13 to 20 (GDGACGKT) coordinates GTP. The Effector region motif lies at 35-43 (YVPTVFENY). Residues 60-64 (DTAGQ) and 118-121 (CKAD) contribute to the GTP site. At C199 the chain carries Cysteine methyl ester. C199 carries S-geranylgeranyl cysteine lipidation. The propeptide at 200–202 (ILL) is removed in mature form.

It belongs to the small GTPase superfamily. Rho family.

Its subcellular location is the cell membrane. Functionally, involved in the regulation of cell wall growth and actin cytoskeleton organization. Activates (1,3)-beta-D-glucan synthase. The sequence is that of GTP-binding protein rho1 (rho1) from Schizosaccharomyces pombe (strain 972 / ATCC 24843) (Fission yeast).